A 292-amino-acid chain; its full sequence is MNNYFDAGNFNTVFNNPNQMSVHGYDPKSGFNNHGFMNRNNLLSNNLCNNLLDEEITEYSVLIDSKDRNYQVYPDPFKYTVKFNPLRRTTEIIDGEKVVNEEPMPVINDNFKNVKYIRLESIILPFYTKIRFVDEDIDGDIVQRAKVNTSKPLTDNLYVLMRIEEFKGVNYKSSNDVLAESFAVIYFDNKISNTHYEGKCNGGIKIFPSDKLGTINSLKISFVSPYGEEINCDHLMKEIKSNMICNCDDPEGDEYTDCFKHNLFHPLNPIFQHHVHFKIGVVTPRLNKLNFN.

It localises to the virion. This is an uncharacterized protein from Acanthamoeba polyphaga (Amoeba).